The primary structure comprises 286 residues: Bifunctional protein FolD (286 aa).

Residues 164–166, serine 193, and isoleucine 234 contribute to the NADP(+) site; that span reads GRS.

It belongs to the tetrahydrofolate dehydrogenase/cyclohydrolase family. In terms of assembly, homodimer.

The enzyme catalyses (6R)-5,10-methylene-5,6,7,8-tetrahydrofolate + NADP(+) = (6R)-5,10-methenyltetrahydrofolate + NADPH. The catalysed reaction is (6R)-5,10-methenyltetrahydrofolate + H2O = (6R)-10-formyltetrahydrofolate + H(+). It participates in one-carbon metabolism; tetrahydrofolate interconversion. Functionally, catalyzes the oxidation of 5,10-methylenetetrahydrofolate to 5,10-methenyltetrahydrofolate and then the hydrolysis of 5,10-methenyltetrahydrofolate to 10-formyltetrahydrofolate. The polypeptide is Bifunctional protein FolD (Maridesulfovibrio salexigens (strain ATCC 14822 / DSM 2638 / NCIMB 8403 / VKM B-1763) (Desulfovibrio salexigens)).